A 279-amino-acid chain; its full sequence is Ultraviolet N-glycosylase/AP lyase (279 aa).

The HhH domain maps to 123 to 142; that stretch reads LEDLVALPGVGRKTAFVVLG. Residues C203, C210, C213, and C219 each coordinate [4Fe-4S] cluster. The tract at residues 256–279 is disordered; sequence TAGAAGPRPRAGGXAPGLPAQPFR.

This sequence belongs to the Nth/MutY family. It depends on [4Fe-4S] cluster as a cofactor.

DNA repair enzyme that has both DNA N-glycosylase activity and AP-lyase activity. Initiates repair at cis-syn pyrimidine dimers. Proceeds via an imino enzyme:DNA intermediate. The polypeptide is Ultraviolet N-glycosylase/AP lyase (pdg) (Micrococcus luteus (strain ATCC 4698 / DSM 20030 / JCM 1464 / CCM 169 / CCUG 5858 / IAM 1056 / NBRC 3333 / NCIMB 9278 / NCTC 2665 / VKM Ac-2230) (Micrococcus lysodeikticus)).